The sequence spans 364 residues: Mannose-1-phosphate guanyltransferase (364 aa).

This sequence belongs to the transferase hexapeptide repeat family.

It is found in the cytoplasm. The enzyme catalyses alpha-D-mannose 1-phosphate + GTP + H(+) = GDP-alpha-D-mannose + diphosphate. It participates in nucleotide-sugar biosynthesis; GDP-alpha-D-mannose biosynthesis; GDP-alpha-D-mannose from alpha-D-mannose 1-phosphate (GTP route): step 1/1. In terms of biological role, involved in cell wall synthesis where it is required for glycosylation. Involved in cell cycle progression through cell-size checkpoint. In Hypocrea jecorina (Trichoderma reesei), this protein is Mannose-1-phosphate guanyltransferase (mpg1).